Here is an 874-residue protein sequence, read N- to C-terminus: Probable inorganic carbon transporter subunit DabA (874 aa).

Zn(2+)-binding residues include Cys398, Asp400, His580, and Cys595.

It belongs to the inorganic carbon transporter (TC 9.A.2) DabA family. As to quaternary structure, forms a complex with DabB. The cofactor is Zn(2+).

It is found in the cell membrane. In terms of biological role, part of an energy-coupled inorganic carbon pump. The polypeptide is Probable inorganic carbon transporter subunit DabA (Bacillus cereus (strain ZK / E33L)).